The primary structure comprises 545 residues: Glucose-6-phosphate isomerase (545 aa).

Catalysis depends on Glu-351, which acts as the Proton donor. Catalysis depends on residues His-382 and Lys-510.

It belongs to the GPI family.

The protein localises to the cytoplasm. It carries out the reaction alpha-D-glucose 6-phosphate = beta-D-fructose 6-phosphate. It functions in the pathway carbohydrate biosynthesis; gluconeogenesis. The protein operates within carbohydrate degradation; glycolysis; D-glyceraldehyde 3-phosphate and glycerone phosphate from D-glucose: step 2/4. Its function is as follows. Catalyzes the reversible isomerization of glucose-6-phosphate to fructose-6-phosphate. This chain is Glucose-6-phosphate isomerase, found in Shewanella sp. (strain MR-7).